The chain runs to 78 residues: Beta-defensin 105A (78 aa).

A signal peptide spans 1 to 27 (MALIRKTFYFLFAVFFILVQLPSGCQA). Disulfide bonds link cysteine 46-cysteine 74, cysteine 53-cysteine 67, and cysteine 57-cysteine 73.

It belongs to the beta-defensin family.

The protein localises to the secreted. Has antimicrobial activity. In Hylobates lar (Lar gibbon), this protein is Beta-defensin 105A (DEFB105A).